A 422-amino-acid polypeptide reads, in one-letter code: MAFIALGINHKTASVAVRERVAFTPEQMVEALQQLCRLTTSREAAILSTCNRSELYLEIDHPTADDVLAWLADYHRLTLDELRACAYVHQDEDAVRHMMRVASGLDSMVLGEPQILGQMKSAYAVAREAGTVGPLLGRLFQATFSTAKTVRTDTAIGENPVSVAFAAVSLAKQIFSDLHRSQALLIGAGETITLVARHLFEQGVKRIVVANRTLERASLLAEQFGAHAVLLSEIPEELANSDIVISSTASQLPILGKGAVERALKQRKHKPMFMVDIAVPRDIEPEVGELDDVYLYSVDDLHEVVAENLKSRQGAAQAAEELVGSGVAEFMQRLRELAAVDVLRAYRQQAERLRDEELGKAQRQLANGADPAEVMAQLARGLTNKLLHAPSVQMKKMSAEGRIDALALAQELFALDEGAPRH.

Residues 49 to 52, Ser-107, 112 to 114, and Gln-118 each bind substrate; these read TCNR and EPQ. The active-site Nucleophile is the Cys-50. Residue 187 to 192 participates in NADP(+) binding; that stretch reads GAGETI.

This sequence belongs to the glutamyl-tRNA reductase family. In terms of assembly, homodimer.

The catalysed reaction is (S)-4-amino-5-oxopentanoate + tRNA(Glu) + NADP(+) = L-glutamyl-tRNA(Glu) + NADPH + H(+). Its pathway is porphyrin-containing compound metabolism; protoporphyrin-IX biosynthesis; 5-aminolevulinate from L-glutamyl-tRNA(Glu): step 1/2. Functionally, catalyzes the NADPH-dependent reduction of glutamyl-tRNA(Glu) to glutamate 1-semialdehyde (GSA). This is Glutamyl-tRNA reductase from Pseudomonas aeruginosa (strain ATCC 15692 / DSM 22644 / CIP 104116 / JCM 14847 / LMG 12228 / 1C / PRS 101 / PAO1).